The chain runs to 65 residues: Large ribosomal subunit protein bL35 (65 aa).

It belongs to the bacterial ribosomal protein bL35 family.

In Alkalilimnicola ehrlichii (strain ATCC BAA-1101 / DSM 17681 / MLHE-1), this protein is Large ribosomal subunit protein bL35.